A 111-amino-acid chain; its full sequence is Cell division protein FtsB (111 aa).

Residues 1-3 (MGK) are Cytoplasmic-facing. A helical transmembrane segment spans residues 4 to 21 (LTLLLLILLGWLQYSLWL). The Periplasmic portion of the chain corresponds to 22–111 (GKNGIHDYVR…TNTPSNNIQR (90 aa)). Residues 33-63 (KDDVVVQQGNNAKLKDRNEQLFAEIDDLNGG) are a coiled coil. Residues 90–111 (ESNHRNANTAPSTNTPSNNIQR) are disordered. The segment covering 95–111 (NANTAPSTNTPSNNIQR) has biased composition (low complexity).

It belongs to the FtsB family. Part of a complex composed of FtsB, FtsL and FtsQ.

The protein localises to the cell inner membrane. Essential cell division protein. May link together the upstream cell division proteins, which are predominantly cytoplasmic, with the downstream cell division proteins, which are predominantly periplasmic. This is Cell division protein FtsB from Pectobacterium carotovorum subsp. carotovorum (strain PC1).